The primary structure comprises 184 residues: MSNLDNIINEILEDAKKESEHILNDANQEKEKIIETKIDQANQEKDTILKKAESEAKGVYDRHLSQVVLKSRDNALFAKQEVIDSVLQKIKDKLKNMSLEDYKKYLTNSLSKMDLNSDDLLVLQSDKYDSLKNENFNVKLSDETVDSGFCIKRGNVLINNNFSSLVDSMKDELEVEIAKTLFKK.

Belongs to the V-ATPase E subunit family.

In terms of biological role, produces ATP from ADP in the presence of a proton gradient across the membrane. The chain is V-type proton ATPase subunit E from Finegoldia magna (strain ATCC 29328 / DSM 20472 / WAL 2508) (Peptostreptococcus magnus).